A 387-amino-acid polypeptide reads, in one-letter code: Alpha-sarcoglycan (387 aa).

The N-terminal stretch at 1-23 (MAAAVTWIPLLAGLLAGLRDTKA) is a signal peptide. Over 24–293 (QQTTLHLLVG…RDFLTDALVT (270 aa)) the chain is Extracellular. N-linked (GlcNAc...) asparagine glycosylation is found at Asn-174 and Asn-246. Residues 294–314 (LLVPLLVALLLTLLLAYIMCF) form a helical membrane-spanning segment. At 315-387 (RREGRLKRDM…AQMPLILDQH (73 aa)) the chain is on the cytoplasmic side. Phosphoserine is present on Ser-377.

The protein belongs to the sarcoglycan alpha/epsilon family. As to quaternary structure, cross-link to form 2 major subcomplexes: one consisting of SGCB, SGCD and SGCG and the other consisting of SGCB and SGCD. The association between SGCB and SGCG is particularly strong while SGCA is loosely associated with the other sarcoglycans. Interacts with the syntrophin SNTA1. As to expression, striated muscle, both skeletal and cardiac.

It is found in the cell membrane. The protein resides in the sarcolemma. Its subcellular location is the cytoplasm. It localises to the cytoskeleton. Component of the sarcoglycan complex, a subcomplex of the dystrophin-glycoprotein complex which forms a link between the F-actin cytoskeleton and the extracellular matrix. The polypeptide is Alpha-sarcoglycan (Sgca) (Mus musculus (Mouse)).